We begin with the raw amino-acid sequence, 364 residues long: Fructose-bisphosphate aldolase B (364 aa).

Ala2 bears the N-acetylalanine mark. At Lys13 the chain carries N6-succinyllysine. Ser36 carries the post-translational modification Phosphoserine. Thr39 is modified (phosphothreonine). Residue Arg43 participates in beta-D-fructose 1,6-bisphosphate binding. Ser89 is subject to Phosphoserine. Phosphothreonine is present on Thr119. Lys121 bears the N6-succinyllysine mark. Ser132 carries the phosphoserine modification. Glu188 serves as the catalytic Proton acceptor. Lys230 acts as the Schiff-base intermediate with dihydroxyacetone-P in catalysis. 4 positions are modified to phosphoserine: Ser272, Ser276, Ser299, and Ser301. 272–274 (SGG) contacts beta-D-fructose 1,6-bisphosphate. Residue Arg304 participates in beta-D-fructose 1,6-bisphosphate binding. Ser309 is subject to Phosphoserine. Lys317 carries the N6-succinyllysine modification.

It belongs to the class I fructose-bisphosphate aldolase family. In terms of assembly, homotetramer. Interacts with BBS1, BBS2, BBS4 and BBS7. Forms a ternary complex with G6PD and TP53; this interaction is direct.

It is found in the cytoplasm. Its subcellular location is the cytosol. It localises to the cytoskeleton. The protein localises to the microtubule organizing center. The protein resides in the centrosome. It is found in the centriolar satellite. It catalyses the reaction beta-D-fructose 1,6-bisphosphate = D-glyceraldehyde 3-phosphate + dihydroxyacetone phosphate. The enzyme catalyses beta-D-fructose 1-phosphate = D-glyceraldehyde + dihydroxyacetone phosphate. It functions in the pathway carbohydrate degradation; glycolysis; D-glyceraldehyde 3-phosphate and glycerone phosphate from D-glucose: step 4/4. It participates in carbohydrate biosynthesis; gluconeogenesis. The protein operates within carbohydrate metabolism; fructose metabolism. Catalyzes the aldol cleavage of fructose 1,6-biphosphate to form two triosephosphates dihydroxyacetone phosphate and D-glyceraldehyde 3-phosphate in glycolysis as well as the reverse stereospecific aldol addition reaction in gluconeogenesis. In fructolysis, metabolizes fructose 1-phosphate derived from the phosphorylation of dietary fructose by fructokinase into dihydroxyacetone phosphate and D-glyceraldehyde. Acts as an adapter independently of its enzymatic activity, exerts a tumor suppressor role by stabilizing the ternary complex with G6PD and TP53 to inhibit G6PD activity and keep oxidative pentose phosphate metabolism in check. The protein is Fructose-bisphosphate aldolase B (ALDOB) of Pongo abelii (Sumatran orangutan).